We begin with the raw amino-acid sequence, 504 residues long: UDP-N-acetylmuramoylalanine--D-glutamate ligase (504 aa).

132 to 138 (GTNGKTT) contributes to the ATP binding site. Residues 284 to 310 (AQDRDATDEPAPTRRRKSESTAPPDIG) form a disordered region.

The protein belongs to the MurCDEF family.

It localises to the cytoplasm. It carries out the reaction UDP-N-acetyl-alpha-D-muramoyl-L-alanine + D-glutamate + ATP = UDP-N-acetyl-alpha-D-muramoyl-L-alanyl-D-glutamate + ADP + phosphate + H(+). It participates in cell wall biogenesis; peptidoglycan biosynthesis. Cell wall formation. Catalyzes the addition of glutamate to the nucleotide precursor UDP-N-acetylmuramoyl-L-alanine (UMA). The sequence is that of UDP-N-acetylmuramoylalanine--D-glutamate ligase from Paraburkholderia phymatum (strain DSM 17167 / CIP 108236 / LMG 21445 / STM815) (Burkholderia phymatum).